The primary structure comprises 560 residues: Thermosome subunit 1 (560 aa).

Positions 525–550 (LSGGQTGSDDDDGGAPGGMGGGMGGM) are disordered. A compositionally biased stretch (gly residues) spans 538–550 (GAPGGMGGGMGGM).

Belongs to the TCP-1 chaperonin family. The thermosome or CCT complex is a oligomeric complex of two octameric double-ring structures; the complex is probably a heterooligomer of CCT1, CCT2 and CCT3 with yet unknown stoichiometry.

Its function is as follows. Molecular chaperone that assists in the folding or refolding of nascent or denatured proteins along with ATP hydrolysis. ATPase activity is highest in thermosome assemblies containing CCT1:CCT2, followed by assemblies containing CCT1:CCT2:CCT3. Required for thermosome ATPase activity. Not required for growth. This Haloferax volcanii (strain ATCC 29605 / DSM 3757 / JCM 8879 / NBRC 14742 / NCIMB 2012 / VKM B-1768 / DS2) (Halobacterium volcanii) protein is Thermosome subunit 1 (cct1).